The primary structure comprises 341 residues: LIM and senescent cell antigen-like-containing domain protein 2 (341 aa).

5 LIM zinc-binding domains span residues 13 to 74 (AVCQ…LFAP), 76 to 133 (CGSC…EKAK), 138 to 195 (YICQ…KMGV), 196 to 255 (PICG…LFGD), and 256 to 315 (VCYN…FPLE). At Phe22 the chain carries Phosphoserine. Phosphothreonine is present on Thr327. Ser328 is subject to Phosphoserine.

As to quaternary structure, interacts with TGFB1I1. Interacts with integrin-linked protein kinase 1 (ILK) via the first LIM domain, and in competition with LIMS1. Part of the heterotrimeric IPP complex composed of integrin-linked kinase (ILK), LIMS1 or LIMS2, and PARVA.

The protein resides in the nucleus. Its subcellular location is the cell junction. It localises to the focal adhesion. It is found in the cell membrane. Functionally, adapter protein in a cytoplasmic complex linking beta-integrins to the actin cytoskeleton, bridges the complex to cell surface receptor tyrosine kinases and growth factor receptors. Plays a role in modulating cell spreading and migration. This Homo sapiens (Human) protein is LIM and senescent cell antigen-like-containing domain protein 2 (LIMS2).